Reading from the N-terminus, the 211-residue chain is Metalloproteinase inhibitor 3 (211 aa).

A signal peptide spans 1–23; that stretch reads MTPWLGLVVLLGSWSLGDWGAEA. Zn(2+) is bound at residue Cys-24. Involved in metalloproteinase-binding regions lie at residues 24-27 and 88-89; these read CTCS and ES. Disulfide bonds link Cys-24-Cys-91, Cys-26-Cys-118, Cys-36-Cys-143, Cys-145-Cys-192, Cys-150-Cys-155, and Cys-163-Cys-184. Residues 24-143 enclose the NTR domain; sequence CTCSPSHPQD…GLNYRYHLGC (120 aa). Residues 105–188 form a mediates interaction with EFEMP1 region; the sequence is TGRVYDGKMY…SKHYACIRQK (84 aa). N-linked (GlcNAc...) asparagine glycosylation occurs at Asn-207.

This sequence belongs to the protease inhibitor I35 (TIMP) family. As to quaternary structure, interacts with EFEMP1. Interacts with KDR.

The protein localises to the secreted. It localises to the extracellular space. It is found in the extracellular matrix. Functionally, mediates a variety of processes including matrix regulation and turnover, inflammation, and angiogenesis, through reversible inhibition of zinc protease superfamily enzymes, primarily matrix metalloproteinases (MMPs). Regulates extracellular matrix (ECM) remodeling through inhibition of matrix metalloproteinases (MMP) including MMP-1, MMP-2, MMP-3, MMP-7, MMP-9, MMP-13, MMP-14 and MMP-15. Additionally, modulates the processing of amyloid precursor protein (APP) and apolipoprotein E receptor ApoER2 by inhibiting two alpha-secretases ADAM10 and ADAM17. Functions as a tumor suppressor and a potent inhibitor of angiogenesis. Exerts its anti-angiogenic effect by directly interacting with vascular endothelial growth factor (VEGF) receptor-2/KDR, preventing its binding to the VEGFA ligand. Selectively induces apoptosis in angiogenic endothelial cells through a caspase-independent cell death pathway. Mechanistically, inhibits matrix-induced focal adhesion kinase PTK2 tyrosine phosphorylation and association with paxillin/PXN and disrupts the incorporation of ITGB3, PTK2 and PXN into focal adhesion contacts on the matrix. The chain is Metalloproteinase inhibitor 3 (TIMP3) from Bos taurus (Bovine).